The following is a 408-amino-acid chain: tRNA-specific 2-thiouridylase MnmA (408 aa).

ATP contacts are provided by residues 38 to 45 (GMSGGVDS) and methionine 64. Positions 124–126 (NPD) are interaction with target base in tRNA. Residue cysteine 129 is the Nucleophile of the active site. Cysteine 129 and cysteine 231 are joined by a disulfide. Glycine 153 is a binding site for ATP. The segment at 181 to 183 (KDQ) is interaction with tRNA. Catalysis depends on cysteine 231, which acts as the Cysteine persulfide intermediate. Positions 348–349 (RY) are interaction with tRNA.

It belongs to the MnmA/TRMU family.

The protein localises to the cytoplasm. It carries out the reaction S-sulfanyl-L-cysteinyl-[protein] + uridine(34) in tRNA + AH2 + ATP = 2-thiouridine(34) in tRNA + L-cysteinyl-[protein] + A + AMP + diphosphate + H(+). Its function is as follows. Catalyzes the 2-thiolation of uridine at the wobble position (U34) of tRNA, leading to the formation of s(2)U34. The polypeptide is tRNA-specific 2-thiouridylase MnmA (Psychrobacter arcticus (strain DSM 17307 / VKM B-2377 / 273-4)).